The chain runs to 539 residues: Fucosyltransferase 2 (539 aa).

The Cytoplasmic portion of the chain corresponds to 1-5 (MRITE). The helical; Signal-anchor for type II membrane protein transmembrane segment at 6-26 (ILALFMVLVPVSLVIVAMFGY) threads the bilayer. Residues 27–539 (DQGNGFVQAS…SWGLKLVDNF (513 aa)) lie on the Lumenal side of the membrane. Asn44, Asn231, and Asn482 each carry an N-linked (GlcNAc...) asparagine glycan.

It belongs to the glycosyltransferase 37 family. Expressed in roots, stems, leaves, flowers, siliques and seedlings.

The protein localises to the golgi apparatus. It localises to the golgi stack membrane. Its pathway is protein modification; protein glycosylation. May be involved in cell wall biosynthesis. May act as a fucosyltransferase. The polypeptide is Fucosyltransferase 2 (FUT2) (Arabidopsis thaliana (Mouse-ear cress)).